Reading from the N-terminus, the 374-residue chain is Alanine racemase (374 aa).

The Proton acceptor; specific for D-alanine role is filled by K35. K35 carries the post-translational modification N6-(pyridoxal phosphate)lysine. R130 is a substrate binding site. Y253 functions as the Proton acceptor; specific for L-alanine in the catalytic mechanism. M305 contributes to the substrate binding site.

Belongs to the alanine racemase family. It depends on pyridoxal 5'-phosphate as a cofactor.

It carries out the reaction L-alanine = D-alanine. It participates in amino-acid biosynthesis; D-alanine biosynthesis; D-alanine from L-alanine: step 1/1. Catalyzes the interconversion of L-alanine and D-alanine. May also act on other amino acids. This is Alanine racemase (alr) from Ralstonia pickettii (strain 12J).